The chain runs to 218 residues: Cell division protein SepF (218 aa).

Residues 20 to 81 (DDEYYDDRAP…GYRGGYADEP (62 aa)) form a disordered region. The segment covering 36–65 (PRFDDDYGRYDGRDYDDARSDSRGDLRGEP) has biased composition (basic and acidic residues).

Belongs to the SepF family. As to quaternary structure, homodimer. Interacts with FtsZ.

It is found in the cytoplasm. In terms of biological role, cell division protein that is part of the divisome complex and is recruited early to the Z-ring. Probably stimulates Z-ring formation, perhaps through the cross-linking of FtsZ protofilaments. Its function overlaps with FtsA. The chain is Cell division protein SepF from Mycobacterium bovis (strain ATCC BAA-935 / AF2122/97).